The chain runs to 238 residues: Ribonuclease PH (238 aa).

Phosphate contacts are provided by residues arginine 86 and 124-126; that span reads GTR.

Belongs to the RNase PH family. As to quaternary structure, homodimer. Has a tendency to aggregate into multimers. The cofactor is Mg(2+).

The catalysed reaction is tRNA(n+1) + phosphate = tRNA(n) + a ribonucleoside 5'-diphosphate. In terms of biological role, phosphorolytic exoribonuclease that plays an important role in tRNA 3'-end maturation; has no activity on a tRNA precursor with a 3'-terminal phosphate group. In vitro is freely reversible, adds nucleotides to the ends of RNA molecules by using nucleoside diphosphates as substrates, but this may not be physiologically important. Probably plays a role in initiation of 16S rRNA degradation (leading to ribosome degradation) during starvation. The polypeptide is Ribonuclease PH (Escherichia coli (strain K12 / MC4100 / BW2952)).